The following is a 237-amino-acid chain: Octopine transport system permease protein OccQ (237 aa).

The ABC transmembrane type-1 domain maps to 22 to 222 (TAMTMAVAFS…LITFVSGQVF (201 aa)). Helical transmembrane passes span 26–46 (MAVAFSGFTIGLVFGCLGAAA), 72–92 (LVIYLFYFGSSSVISNVASLF), 96–116 (GFVGASTFLIGALAIGVVSGA), and 202–222 (SFYLTAAALYLLITFVSGQVF).

This sequence belongs to the binding-protein-dependent transport system permease family. HisMQ subfamily.

The protein localises to the cell inner membrane. Component of the octopine active transport system probably consisting of four subunits: Q, M, P and T. In Agrobacterium tumefaciens (strain Ach5), this protein is Octopine transport system permease protein OccQ (occQ).